Reading from the N-terminus, the 687-residue chain is uncharacterized protein (687 aa).

Residues 277–295 are compositionally biased toward low complexity; it reads SVCSSQSFSSGQSDISMSS. 3 disordered regions span residues 277–337, 342–361, and 531–564; these read SVCS…QDCD, DTES…SEMP, and HVEQ…PSLI. The segment covering 300 to 313 has biased composition (polar residues); the sequence is NGSSVGNGSLSPMT.

This is an uncharacterized protein from Caenorhabditis elegans.